The sequence spans 170 residues: UPF0201 protein MJ1564 (170 aa).

The segment covering 133 to 148 has biased composition (acidic residues); that stretch reads NEDELEEEEEKEDSEE. The disordered stretch occupies residues 133 to 170; it reads NEDELEEEEEKEDSEEIKEGHKEENNLKIKVIDNSSGD. Residues 149–163 show a composition bias toward basic and acidic residues; the sequence is IKEGHKEENNLKIKV.

This sequence belongs to the UPF0201 family.

The polypeptide is UPF0201 protein MJ1564 (Methanocaldococcus jannaschii (strain ATCC 43067 / DSM 2661 / JAL-1 / JCM 10045 / NBRC 100440) (Methanococcus jannaschii)).